Reading from the N-terminus, the 202-residue chain is Holliday junction branch migration complex subunit RuvA (202 aa).

A domain I region spans residues 1–65; that stretch reads MIGYLEGRVV…EDALELFGFA (65 aa). A domain II region spans residues 66–144; it reads SLDDRETFRT…GRAPAAGLAP (79 aa). The interval 145-155 is flexible linker; that stretch reads SVPIPGGVAGD. Positions 155–202 are domain III; that stretch reads DVVAGLTNLGYPEPEARQVAAEVLEAEPDLDVAAALRQALKRLASAKK.

It belongs to the RuvA family. In terms of assembly, homotetramer. Forms an RuvA(8)-RuvB(12)-Holliday junction (HJ) complex. HJ DNA is sandwiched between 2 RuvA tetramers; dsDNA enters through RuvA and exits via RuvB. An RuvB hexamer assembles on each DNA strand where it exits the tetramer. Each RuvB hexamer is contacted by two RuvA subunits (via domain III) on 2 adjacent RuvB subunits; this complex drives branch migration. In the full resolvosome a probable DNA-RuvA(4)-RuvB(12)-RuvC(2) complex forms which resolves the HJ.

It localises to the cytoplasm. Its function is as follows. The RuvA-RuvB-RuvC complex processes Holliday junction (HJ) DNA during genetic recombination and DNA repair, while the RuvA-RuvB complex plays an important role in the rescue of blocked DNA replication forks via replication fork reversal (RFR). RuvA specifically binds to HJ cruciform DNA, conferring on it an open structure. The RuvB hexamer acts as an ATP-dependent pump, pulling dsDNA into and through the RuvAB complex. HJ branch migration allows RuvC to scan DNA until it finds its consensus sequence, where it cleaves and resolves the cruciform DNA. This Solidesulfovibrio magneticus (strain ATCC 700980 / DSM 13731 / RS-1) (Desulfovibrio magneticus) protein is Holliday junction branch migration complex subunit RuvA.